A 173-amino-acid polypeptide reads, in one-letter code: NADH-quinone oxidoreductase subunit I 1 (173 aa).

4Fe-4S ferredoxin-type domains are found at residues 41–73 (IVLT…LAKA) and 83–112 (EHFR…LTPD). [4Fe-4S] cluster-binding residues include Cys-53, Cys-56, Cys-59, Cys-63, Cys-92, Cys-95, Cys-98, and Cys-102.

It belongs to the complex I 23 kDa subunit family. As to quaternary structure, NDH-1 is composed of 14 different subunits. Subunits NuoA, H, J, K, L, M, N constitute the membrane sector of the complex. It depends on [4Fe-4S] cluster as a cofactor.

The protein resides in the cell inner membrane. The enzyme catalyses a quinone + NADH + 5 H(+)(in) = a quinol + NAD(+) + 4 H(+)(out). NDH-1 shuttles electrons from NADH, via FMN and iron-sulfur (Fe-S) centers, to quinones in the respiratory chain. The immediate electron acceptor for the enzyme in this species is believed to be ubiquinone. Couples the redox reaction to proton translocation (for every two electrons transferred, four hydrogen ions are translocated across the cytoplasmic membrane), and thus conserves the redox energy in a proton gradient. The sequence is that of NADH-quinone oxidoreductase subunit I 1 from Rhodopseudomonas palustris (strain BisA53).